Consider the following 70-residue polypeptide: uncharacterized protein (70 aa).

This is an uncharacterized protein from Sinorhizobium fredii (strain NBRC 101917 / NGR234).